The primary structure comprises 291 residues: Protease HtpX homolog (291 aa).

The next 2 helical transmembrane spans lie at 4–24 and 39–59; these read ILLFILTNVAVVAVLGIVASL and SALLGFALIMGFGGAIISLLI. Histidine 144 contacts Zn(2+). Glutamate 145 is an active-site residue. Histidine 148 is a Zn(2+) binding site. 2 consecutive transmembrane segments (helical) span residues 159–179 and 199–219; these read LIQGVMNTFVVFLSRVIGYAV and VSTIVLDIVLGFAAAIVVAWF. Glutamate 224 provides a ligand contact to Zn(2+).

The protein belongs to the peptidase M48B family. The cofactor is Zn(2+).

The protein resides in the cell inner membrane. The sequence is that of Protease HtpX homolog from Polaromonas naphthalenivorans (strain CJ2).